The sequence spans 86 residues: Small ribosomal subunit protein bS18c (86 aa).

This sequence belongs to the bacterial ribosomal protein bS18 family. As to quaternary structure, part of the 30S ribosomal subunit.

The protein localises to the plastid. Its subcellular location is the chloroplast. This chain is Small ribosomal subunit protein bS18c, found in Pseudotsuga menziesii (Douglas-fir).